A 65-amino-acid chain; its full sequence is Large ribosomal subunit protein bL35 (65 aa).

It belongs to the bacterial ribosomal protein bL35 family.

The chain is Large ribosomal subunit protein bL35 from Rubrobacter xylanophilus (strain DSM 9941 / JCM 11954 / NBRC 16129 / PRD-1).